Consider the following 273-residue polypeptide: Protein ALUMINUM SENSITIVE 3 (273 aa).

Transmembrane regions (helical) follow at residues 14–34 (WLIV…VVLL), 51–71 (IYSV…LQFI), 76–96 (NSGW…YTAG), 107–127 (YVAG…LVLL), 136–156 (YMIP…GVTM), 191–213 (ALVI…SLPG), and 228–248 (AIQL…VSSI).

The protein belongs to the UPF0014 family. Expressed in roots, leaves, stems, and flowers.

It localises to the cell membrane. Its function is as follows. Required for aluminum (Al) resistance/tolerance, probably by translocating Al from sensitive tissues such as growing roots to tissues less sensisitive to the toxic effects of Al. This Arabidopsis thaliana (Mouse-ear cress) protein is Protein ALUMINUM SENSITIVE 3 (ALS3).